Here is a 220-residue protein sequence, read N- to C-terminus: MOB kinase activator-like 3 (220 aa).

Cys83, Cys88, His165, and His170 together coordinate Zn(2+).

It belongs to the MOB1/phocein family.

The chain is MOB kinase activator-like 3 (Mob3) from Drosophila melanogaster (Fruit fly).